Consider the following 87-residue polypeptide: Small ribosomal subunit protein bS20 (87 aa).

The tract at residues 1 to 22 (MANSPQAKKRARQNEKRFAINK) is disordered.

This sequence belongs to the bacterial ribosomal protein bS20 family.

In terms of biological role, binds directly to 16S ribosomal RNA. The sequence is that of Small ribosomal subunit protein bS20 from Ruegeria sp. (strain TM1040) (Silicibacter sp.).